The following is a 133-amino-acid chain: Histone H2A.1 (133 aa).

Residues 1 to 23 form a disordered region; the sequence is MSTTGKGGKAKGKTASSKQVSRS. At serine 2 the chain carries N-acetylserine. N6-acetyllysine is present on residues lysine 6, lysine 9, lysine 11, lysine 13, and lysine 18. Position 123 is a phosphoserine (serine 123). A Glycyl lysine isopeptide (Lys-Gly) (interchain with G-Cter in ubiquitin) cross-link involves residue lysine 124. The residue at position 129 (serine 129) is a Phosphoserine.

The protein belongs to the histone H2A family. The nucleosome is a histone octamer containing two molecules each of H2A, H2B, H3 and H4 assembled in one H3-H4 heterotetramer and two H2A-H2B heterodimers. The octamer wraps approximately 147 bp of DNA. Monoubiquitination of Lys-124 gives a specific tag for epigenetic transcriptional repression. Post-translationally, acetylation occurs almost exclusively in the MAC.

The protein localises to the nucleus. It localises to the chromosome. In terms of biological role, core component of nucleosome. Nucleosomes wrap and compact DNA into chromatin, limiting DNA accessibility to the cellular machineries which require DNA as a template. Histones thereby play a central role in transcription regulation, DNA repair, DNA replication and chromosomal stability. DNA accessibility is regulated via a complex set of post-translational modifications of histones, also called histone code, and nucleosome remodeling. In Tetrahymena pyriformis, this protein is Histone H2A.1 (HTA2).